The chain runs to 272 residues: 4-diphosphocytidyl-2-C-methyl-D-erythritol kinase (272 aa).

Lys-14 is an active-site residue. 92–102 lines the ATP pocket; that stretch reads PMGGGLGGGSS. Residue Asp-132 is part of the active site.

The protein belongs to the GHMP kinase family. IspE subfamily.

It carries out the reaction 4-CDP-2-C-methyl-D-erythritol + ATP = 4-CDP-2-C-methyl-D-erythritol 2-phosphate + ADP + H(+). It functions in the pathway isoprenoid biosynthesis; isopentenyl diphosphate biosynthesis via DXP pathway; isopentenyl diphosphate from 1-deoxy-D-xylulose 5-phosphate: step 3/6. Its function is as follows. Catalyzes the phosphorylation of the position 2 hydroxy group of 4-diphosphocytidyl-2C-methyl-D-erythritol. The protein is 4-diphosphocytidyl-2-C-methyl-D-erythritol kinase of Fervidobacterium nodosum (strain ATCC 35602 / DSM 5306 / Rt17-B1).